Consider the following 36-residue polypeptide: Cytochrome b6-f complex subunit 7 (36 aa).

A helical transmembrane segment spans residues 5–25 (IFFVAGLVFVLTLVGMAIGFG).

Belongs to the PetM family. The 4 large subunits of the cytochrome b6-f complex are cytochrome b6, subunit IV (17 kDa polypeptide, PetD), cytochrome f and the Rieske protein, while the 4 small subunits are PetG, PetL, PetM and PetN. The complex functions as a dimer.

Its subcellular location is the cell inner membrane. Component of the cytochrome b6-f complex, which mediates electron transfer between photosystem II (PSII) and photosystem I (PSI), cyclic electron flow around PSI, and state transitions. This chain is Cytochrome b6-f complex subunit 7, found in Gloeobacter violaceus (strain ATCC 29082 / PCC 7421).